We begin with the raw amino-acid sequence, 446 residues long: Tubulin alpha-1B chain (446 aa).

Glutamine 11 contacts GTP. The disordered stretch occupies residues 34-55; sequence GRLMDDSPSKHDSGSTFFSETG. The segment covering 35 to 46 has biased composition (basic and acidic residues); the sequence is RLMDDSPSKHDS. Residues glutamate 69, serine 138, glycine 142, threonine 143, serine 177, asparagine 204, and asparagine 226 each coordinate GTP. Glutamate 69 is a binding site for Mg(2+). The active site involves glutamate 252.

The protein belongs to the tubulin family. In terms of assembly, dimer of alpha and beta chains. A typical microtubule is a hollow water-filled tube with an outer diameter of 25 nm and an inner diameter of 15 nM. Alpha-beta heterodimers associate head-to-tail to form protofilaments running lengthwise along the microtubule wall with the beta-tubulin subunit facing the microtubule plus end conferring a structural polarity. Microtubules usually have 13 protofilaments but different protofilament numbers can be found in some organisms and specialized cells. Requires Mg(2+) as cofactor.

The protein localises to the cytoplasm. It is found in the cytoskeleton. The enzyme catalyses GTP + H2O = GDP + phosphate + H(+). Functionally, tubulin is the major constituent of microtubules, a cylinder consisting of laterally associated linear protofilaments composed of alpha- and beta-tubulin heterodimers. Microtubules grow by the addition of GTP-tubulin dimers to the microtubule end, where a stabilizing cap forms. Below the cap, tubulin dimers are in GDP-bound state, owing to GTPase activity of alpha-tubulin. The protein is Tubulin alpha-1B chain (TUB-1B) of Schizophyllum commune (Split gill fungus).